A 462-amino-acid chain; its full sequence is MSKLWGGRFTEEAEAWVEEFGASISFDQQLVNQDINGSIAHVTMLAKQGIVTKEEAEKIKIGLQYLLEEAKQNKLHFSVEAEDIHLNIEKMLIEKIGEVGGKLHTGRSRNDQVATDMHLYLKEKVEHIIKATKQLQTVLVHQAENNIETIMPGYTHLQRAQPISFAHHILAYFWMLERDVNRYEDSLKRINISPLGAGALAGTTFPIDREYSAELLGFNGMYENSLDAVSDRDFILEFLSNSSMLMMHLSRFCEELILWSSQEFQFIEMSDQYATGSSIMPQKKNPDMAELIRGKTGRVYGNLFSLLTVMKGLPLAYNKDLQEDKEGMFDTVKTVEGCLHIMAGMLETMTVNKEKMGQAVTQDFSNATEIADYLANKGLPFRQAHEIVGKLVLHCTQKGIYLVDVPLATYKEMSSLFEEDLYEVLSPYAAVKRRNSAGGTGFEQIEKALEKAKGLTKEVIKN.

It belongs to the lyase 1 family. Argininosuccinate lyase subfamily.

The protein resides in the cytoplasm. The enzyme catalyses 2-(N(omega)-L-arginino)succinate = fumarate + L-arginine. The protein operates within amino-acid biosynthesis; L-arginine biosynthesis; L-arginine from L-ornithine and carbamoyl phosphate: step 3/3. This chain is Argininosuccinate lyase, found in Bacillus cereus (strain ATCC 10987 / NRS 248).